Consider the following 322-residue polypeptide: Atrochrysone carboxyl ACP thioesterase nsrC (322 aa).

Zn(2+) is bound by residues histidine 105, histidine 107, aspartate 109, and histidine 110. The active-site Proton donor/acceptor is the aspartate 109.

Belongs to the metallo-beta-lactamase superfamily. Zn(2+) is required as a cofactor.

It carries out the reaction atrochrysone carboxyl-[ACP] + H2O = atrochrysone carboxylate + holo-[ACP] + H(+). Its pathway is secondary metabolite biosynthesis. Its function is as follows. Atrochrysone carboxyl ACP thioesterase; part of the gene cluster that mediates the biosynthesis of the tetrahydroxanthone dimer neosartorin, which exhibits antibacterial activity. The two different monomeric units appear to be synthesized by the same set of enzymes, among which the Baeyer-Villiger monooxygenase nsrF is the key enzyme for the divergence of the biosynthetic routes. The pathway begins with the synthesis of atrochrysone thioester by the polyketide synthase nsrB. The atrochrysone carboxyl ACP thioesterase nsrC then breaks the thioester bond and releases the atrochrysone carboxylic acid from AacuL. Atrochrysone carboxylic acid is decarboxylated by the decarboxylase nsrE, and oxidized by the anthrone oxygenase nsrD to yield emodin. Emodin is then reduced to emodin hydroquinone by the oxidoreductase nsrR. A-ring reduction by the short chain dehydrogenase nsrJ, dehydration by the scytalone dehydratase-like protein nsrI and probable spontaneous re-oxidation, results in overall deoxygenation to chrysophanol. The Baeyer-Villiger monooxygenase nsrF accepts chrysophanol as a substrate to insert one oxygen atom at two different positions to yield the precursors of both monomric units. NsrF is promiscuous/flexible in interacting with the 2 (non methylated and methylated) aromatic rings of chrysophanol, thus diverging the biosynthetic pathway at this point. After the hydrolysis of the lactones, methylesterification by the methyltransferase nsrG yields respectively moniliphenone and 2,2',6'-trihydroxy-4-methyl-6-methoxya-cyldiphenylmethanone. The next steps are the hydroxylation by the FAD-dependent monooxygenase nsrK, followed by isomerization by the monooxygenase nsrQ. The short chain dehydrogenase/reductase nsrO then catalyzes the C-5 ketoreduction to give the xanthone skeleton of blennolide C and 5-acetylblennolide A. The acetyltransferase nsrL has a strict substrate specificity and uses only blennolide A but not blennolide C to yield 5-acetylblennolide A as the single-acetylated product. In the final step of the biosynthesis, the heterodimerization of the 2 xanthones, blennolide C and 5-acetylblennolide A, is catalyzed by the cytochrome P450 monooxygenase nsrP. NsrP can utilize at least three different xanthones as its substrates to perform the dimerization reaction. The polypeptide is Atrochrysone carboxyl ACP thioesterase nsrC (Aspergillus novofumigatus (strain IBT 16806)).